The sequence spans 147 residues: uncharacterized protein (147 aa).

To M.jannaschii MJ0215.

This is an uncharacterized protein from Methanocaldococcus jannaschii (strain ATCC 43067 / DSM 2661 / JAL-1 / JCM 10045 / NBRC 100440) (Methanococcus jannaschii).